A 501-amino-acid chain; its full sequence is Cytoplasmic tRNA 2-thiolation protein 2 (501 aa).

Over residues 1-12 (MCEMSEEYRESA) the composition is skewed to basic and acidic residues. 2 disordered regions span residues 1–23 (MCEMSEEYRESAPKGPPPPRLGT) and 192–214 (GVERQSQHCAQDPQSPTGPPTTA). N-acetylcysteine is present on Cys-2. The residue at position 492 (Ser-492) is a Phosphoserine.

It belongs to the CTU2/NCS2 family. As to quaternary structure, component of a complex at least composed of URM1, CTU2/NCS2 and CTU1/ATPBD3.

The protein resides in the cytoplasm. It functions in the pathway tRNA modification; 5-methoxycarbonylmethyl-2-thiouridine-tRNA biosynthesis. In terms of biological role, plays a central role in 2-thiolation of mcm(5)S(2)U at tRNA wobble positions of tRNA(Lys), tRNA(Glu) and tRNA(Gln). May act by forming a heterodimer with CTU1/ATPBD3 that ligates sulfur from thiocarboxylated URM1 onto the uridine of tRNAs at wobble position. This Bos taurus (Bovine) protein is Cytoplasmic tRNA 2-thiolation protein 2.